We begin with the raw amino-acid sequence, 930 residues long: Isoleucine--tRNA ligase (930 aa).

The 'HIGH' region signature appears at 57–67 (PYANGNIHVGH). Position 554 (E554) interacts with L-isoleucyl-5'-AMP. A 'KMSKS' region motif is present at residues 595 to 599 (KMSKS). Position 598 (K598) interacts with ATP. Zn(2+) contacts are provided by C888, C891, C908, and C911.

Belongs to the class-I aminoacyl-tRNA synthetase family. IleS type 1 subfamily. In terms of assembly, monomer. Zn(2+) serves as cofactor.

Its subcellular location is the cytoplasm. The enzyme catalyses tRNA(Ile) + L-isoleucine + ATP = L-isoleucyl-tRNA(Ile) + AMP + diphosphate. Functionally, catalyzes the attachment of isoleucine to tRNA(Ile). As IleRS can inadvertently accommodate and process structurally similar amino acids such as valine, to avoid such errors it has two additional distinct tRNA(Ile)-dependent editing activities. One activity is designated as 'pretransfer' editing and involves the hydrolysis of activated Val-AMP. The other activity is designated 'posttransfer' editing and involves deacylation of mischarged Val-tRNA(Ile). In Streptococcus pneumoniae (strain P1031), this protein is Isoleucine--tRNA ligase.